Here is a 95-residue protein sequence, read N- to C-terminus: Large ribosomal subunit protein bL27 (95 aa).

Residues 1–6 constitute a propeptide that is removed on maturation; sequence MILQLF.

This sequence belongs to the bacterial ribosomal protein bL27 family. In terms of processing, the N-terminus is cleaved by ribosomal processing cysteine protease Prp.

The chain is Large ribosomal subunit protein bL27 from Caldanaerobacter subterraneus subsp. tengcongensis (strain DSM 15242 / JCM 11007 / NBRC 100824 / MB4) (Thermoanaerobacter tengcongensis).